A 281-amino-acid polypeptide reads, in one-letter code: BEN domain-containing protein 6 (281 aa).

Disordered stretches follow at residues 15–62 (VLRK…ETPL) and 143–172 (SFASLCSNSNSTSSSPSSVKAEEEQHPGEK). Positions 19–99 (RKRKRTETAN…RLRQSLVMLQ (81 aa)) form a coiled coil. Positions 143-160 (SFASLCSNSNSTSSSPSS) are enriched in low complexity. Residues 162 to 172 (KAEEEQHPGEK) show a composition bias toward basic and acidic residues. The region spanning 171–271 (EKQFTIERWQ…NCTKKPNASK (101 aa)) is the BEN domain.

Interacts (via BEN domain) with RBPJ.

It localises to the nucleus. In terms of biological role, acts as a corepressor of recombining binding protein suppressor hairless (RBPJ) and inhibits Notch signaling in neural stem cells, thereby opposing their self-renewal and promoting neurogenesis. This is BEN domain-containing protein 6 (Bend6) from Mus musculus (Mouse).